Here is a 376-residue protein sequence, read N- to C-terminus: tRNA-specific 2-thiouridylase MnmA (376 aa).

ATP-binding positions include 10-17 (GMSGGVDS) and Met-36. The tract at residues 96 to 98 (NPD) is interaction with target base in tRNA. Cys-101 acts as the Nucleophile in catalysis. Cys-101 and Cys-198 are oxidised to a cystine. Gly-125 contributes to the ATP binding site. The tract at residues 148 to 150 (KDQ) is interaction with tRNA. Cys-198 (cysteine persulfide intermediate) is an active-site residue. The tract at residues 305 to 306 (RY) is interaction with tRNA.

Belongs to the MnmA/TRMU family.

The protein localises to the cytoplasm. The enzyme catalyses S-sulfanyl-L-cysteinyl-[protein] + uridine(34) in tRNA + AH2 + ATP = 2-thiouridine(34) in tRNA + L-cysteinyl-[protein] + A + AMP + diphosphate + H(+). Functionally, catalyzes the 2-thiolation of uridine at the wobble position (U34) of tRNA, leading to the formation of s(2)U34. This Protochlamydia amoebophila (strain UWE25) protein is tRNA-specific 2-thiouridylase MnmA.